A 332-amino-acid polypeptide reads, in one-letter code: UPF0158 protein TC_0713 (332 aa).

Disordered regions lie at residues Ala196–Ala215 and Leu291–Ser332. Over residues Gly295 to Asp316 the composition is skewed to acidic residues. Basic residues predominate over residues Lys320 to Ser332.

This sequence belongs to the UPF0158 family.

The chain is UPF0158 protein TC_0713 from Chlamydia muridarum (strain MoPn / Nigg).